Here is a 235-residue protein sequence, read N- to C-terminus: 2-C-methyl-D-erythritol 4-phosphate cytidylyltransferase (235 aa).

Belongs to the IspD/TarI cytidylyltransferase family. IspD subfamily.

It carries out the reaction 2-C-methyl-D-erythritol 4-phosphate + CTP + H(+) = 4-CDP-2-C-methyl-D-erythritol + diphosphate. Its pathway is isoprenoid biosynthesis; isopentenyl diphosphate biosynthesis via DXP pathway; isopentenyl diphosphate from 1-deoxy-D-xylulose 5-phosphate: step 2/6. Catalyzes the formation of 4-diphosphocytidyl-2-C-methyl-D-erythritol from CTP and 2-C-methyl-D-erythritol 4-phosphate (MEP). This chain is 2-C-methyl-D-erythritol 4-phosphate cytidylyltransferase, found in Mycolicibacterium paratuberculosis (strain ATCC BAA-968 / K-10) (Mycobacterium paratuberculosis).